The sequence spans 445 residues: N-succinylarginine dihydrolase (445 aa).

Substrate is bound by residues 19–28 (AGLSFGNVAS), Asn-110, and 137–138 (HR). Glu-174 is a catalytic residue. Arg-214 is a substrate binding site. His-250 is an active-site residue. Substrate is bound by residues Asp-252 and Asn-363. Cys-369 (nucleophile) is an active-site residue.

This sequence belongs to the succinylarginine dihydrolase family. In terms of assembly, homodimer.

The catalysed reaction is N(2)-succinyl-L-arginine + 2 H2O + 2 H(+) = N(2)-succinyl-L-ornithine + 2 NH4(+) + CO2. Its pathway is amino-acid degradation; L-arginine degradation via AST pathway; L-glutamate and succinate from L-arginine: step 2/5. Functionally, catalyzes the hydrolysis of N(2)-succinylarginine into N(2)-succinylornithine, ammonia and CO(2). The sequence is that of N-succinylarginine dihydrolase from Shewanella pealeana (strain ATCC 700345 / ANG-SQ1).